The chain runs to 615 residues: Chaperone protein HscA homolog (615 aa).

This sequence belongs to the heat shock protein 70 family.

Its function is as follows. Chaperone involved in the maturation of iron-sulfur cluster-containing proteins. Has a low intrinsic ATPase activity which is markedly stimulated by HscB. The protein is Chaperone protein HscA homolog of Aeromonas hydrophila subsp. hydrophila (strain ATCC 7966 / DSM 30187 / BCRC 13018 / CCUG 14551 / JCM 1027 / KCTC 2358 / NCIMB 9240 / NCTC 8049).